The following is a 651-amino-acid chain: Probable potassium transport system protein Kup (651 aa).

12 helical membrane-spanning segments follow: residues 41-61 (LVLG…IYAF), 82-102 (VVSL…VLFV), 130-150 (LILG…VITP), 163-183 (IVAP…LVTL), 194-214 (VAIV…ASGL), 235-255 (FLTV…LAMT), 276-296 (WLWI…AFIL), 309-329 (MIPS…TVIA), 366-386 (IYIP…VLGF), 395-415 (AYGI…YIVM), 426-446 (ALPI…ANII), and 450-470 (EGGW…WTWV).

It belongs to the HAK/KUP transporter (TC 2.A.72) family.

The protein localises to the cell inner membrane. It carries out the reaction K(+)(in) + H(+)(in) = K(+)(out) + H(+)(out). Transport of potassium into the cell. Likely operates as a K(+):H(+) symporter. This chain is Probable potassium transport system protein Kup, found in Brucella canis (strain ATCC 23365 / NCTC 10854 / RM-666).